The primary structure comprises 276 residues: NH(3)-dependent NAD(+) synthetase (276 aa).

An ATP-binding site is contributed by 43–50; the sequence is GISGGVDS. Asp-49 is a binding site for Mg(2+). Arg-146 is a deamido-NAD(+) binding site. ATP is bound at residue Thr-166. Position 171 (Glu-171) interacts with Mg(2+). Lys-179 and Asp-186 together coordinate deamido-NAD(+). ATP contacts are provided by Lys-195 and Thr-217. 266–267 is a deamido-NAD(+) binding site; that stretch reads HK.

The protein belongs to the NAD synthetase family. As to quaternary structure, homodimer.

It carries out the reaction deamido-NAD(+) + NH4(+) + ATP = AMP + diphosphate + NAD(+) + H(+). It functions in the pathway cofactor biosynthesis; NAD(+) biosynthesis; NAD(+) from deamido-NAD(+) (ammonia route): step 1/1. Catalyzes the ATP-dependent amidation of deamido-NAD to form NAD. Uses ammonia as a nitrogen source. This Shewanella amazonensis (strain ATCC BAA-1098 / SB2B) protein is NH(3)-dependent NAD(+) synthetase.